A 135-amino-acid polypeptide reads, in one-letter code: Prostate and breast cancer overexpressed gene 1 protein (135 aa).

In terms of tissue distribution, expressed in colon, prostate, small intestine, testis and spleen, with lower expression in thymus, ovary, and peripheral blood leukocytes. Up-regulated expression in prostate, breast, and bladder cancer, but not in lung and colon cancer.

Its subcellular location is the cytoplasm. The protein localises to the nucleus. This chain is Prostate and breast cancer overexpressed gene 1 protein (PBOV1), found in Homo sapiens (Human).